A 585-amino-acid chain; its full sequence is MKQRELRERAAELPAEPGVYQFLEDNTVRYVGKALELRDRVRSYADPRSERIRQMVARADDIDIALTETETQALLLEANLIKRHQPRYNVRLKDDKSYPLVQFTNHSVPRIEVTRDPDSDATVFGPYTEVKRLETAVKALREVYGLRGCSDHKYNNRNRPCLEYEVGLCSAPCTGEIDATAYRSAVESAVQFFEGKTGILADPLRQEMQAAATAEEFERAANIRDRLAVIESFHGGGEAAVSSEDNSHTAETTSERAVDVLGVAIEGTTATVARLHSDNGQLVDRSQHRLNAPTGEDRASAVLTAFLTQYYAERSLPDAILCSEHPHDNDVREWLSVEGVNIRVPGTGRESKLIDLALKNARNGSVHDNESAALADALGFSIINRIEGFDVSHSQGRAVVGSNVCFIDGSAATDAYRRKRLTDTNDDYARMQELLTWRAKRACDGRDERPDPDLIVIDGGKGQLRAAREAVETTGWDVSTIALAKADELVVTPNGVHDWDADAPQLHLLQRVRDEAHRFAVQYHQSIRDDIHTVLSDVPGVGEQTQQALLRRFGSVENVRSASRDALCDVPGVGKQTADTIANRL.

In terms of domain architecture, GIY-YIG spans 15–90 (AEPGVYQFLE…IKRHQPRYNV (76 aa)). Residues 198–233 (GILADPLRQEMQAAATAEEFERAANIRDRLAVIESF) enclose the UVR domain.

It belongs to the UvrC family. In terms of assembly, interacts with UvrB in an incision complex.

The protein localises to the cytoplasm. The UvrABC repair system catalyzes the recognition and processing of DNA lesions. UvrC both incises the 5' and 3' sides of the lesion. The N-terminal half is responsible for the 3' incision and the C-terminal half is responsible for the 5' incision. This Haloquadratum walsbyi (strain DSM 16790 / HBSQ001) protein is UvrABC system protein C.